Consider the following 96-residue polypeptide: Glutamyl-tRNA(Gln) amidotransferase subunit C (96 aa).

The protein belongs to the GatC family. Heterotrimer of A, B and C subunits.

The enzyme catalyses L-glutamyl-tRNA(Gln) + L-glutamine + ATP + H2O = L-glutaminyl-tRNA(Gln) + L-glutamate + ADP + phosphate + H(+). It carries out the reaction L-aspartyl-tRNA(Asn) + L-glutamine + ATP + H2O = L-asparaginyl-tRNA(Asn) + L-glutamate + ADP + phosphate + 2 H(+). Functionally, allows the formation of correctly charged Asn-tRNA(Asn) or Gln-tRNA(Gln) through the transamidation of misacylated Asp-tRNA(Asn) or Glu-tRNA(Gln) in organisms which lack either or both of asparaginyl-tRNA or glutaminyl-tRNA synthetases. The reaction takes place in the presence of glutamine and ATP through an activated phospho-Asp-tRNA(Asn) or phospho-Glu-tRNA(Gln). This chain is Glutamyl-tRNA(Gln) amidotransferase subunit C, found in Neisseria meningitidis serogroup B (strain ATCC BAA-335 / MC58).